Consider the following 324-residue polypeptide: Putative transcription factor sel-7 (324 aa).

Polar residues predominate over residues 67 to 85 (SPPQTVISEAPPQSFTPSA). Residues 67–151 (SPPQTVISEA…DEKVLADGPF (85 aa)) form a disordered region. A compositionally biased stretch (low complexity) spans 86-98 (TNSTSDKTSSSLK). Over residues 106–123 (SDGDLDMEGEEDTEELFD) the composition is skewed to acidic residues. Polar residues predominate over residues 124–133 (NESQPSQRNQ). Residues 134–146 (SPKETEVEDEKVL) are compositionally biased toward basic and acidic residues.

As to quaternary structure, multimer. May interact with mediator complex subunit mdt-29. In terms of tissue distribution, widely expressed, including in pharyngeal muscle cells and body wall muscle cells.

It is found in the nucleus. In terms of biological role, putative transcription factor. Positive regulator of the lin-12/Notch signaling pathway. Binds to specific DNA sequences in regulatory elements. Involved in cell fate decisions that require cell-cell interactions, such as the anchor cell (AC) / ventral uterine (VU) precursor cell fate decision. Heterochronic protein which controls the choice of stage specific cell fates, including the larval L3 stage-specific fate of seam cells. Involved in regulating the temporal expression pattern of hunchback-like protein hbl-1, thereby playing a role in the progression between larval stages L2 and L3. The polypeptide is Putative transcription factor sel-7 (Caenorhabditis elegans).